The sequence spans 153 residues: Large ribosomal subunit protein bL9 (153 aa).

It belongs to the bacterial ribosomal protein bL9 family.

In terms of biological role, binds to the 23S rRNA. This is Large ribosomal subunit protein bL9 from Micrococcus luteus (strain ATCC 4698 / DSM 20030 / JCM 1464 / CCM 169 / CCUG 5858 / IAM 1056 / NBRC 3333 / NCIMB 9278 / NCTC 2665 / VKM Ac-2230) (Micrococcus lysodeikticus).